The primary structure comprises 245 residues: 5'-nucleotidase SurE (245 aa).

A divalent metal cation-binding residues include aspartate 8, aspartate 9, serine 39, and asparagine 91.

The protein belongs to the SurE nucleotidase family. It depends on a divalent metal cation as a cofactor.

The protein resides in the cytoplasm. It carries out the reaction a ribonucleoside 5'-phosphate + H2O = a ribonucleoside + phosphate. Functionally, nucleotidase that shows phosphatase activity on nucleoside 5'-monophosphates. In Janthinobacterium sp. (strain Marseille) (Minibacterium massiliensis), this protein is 5'-nucleotidase SurE.